The sequence spans 178 residues: PRA1 family protein 2 (178 aa).

Residues methionine 1–leucine 41 lie on the Cytoplasmic side of the membrane. A helical membrane pass occupies residues leucine 42–valine 62. At arginine 63–proline 64 the chain is on the extracellular side. Residues leucine 65 to alanine 85 form a helical membrane-spanning segment. Residues glutamate 86 to arginine 96 lie on the Cytoplasmic side of the membrane. The helical transmembrane segment at serine 97–glycine 119 threads the bilayer. Topologically, residues alanine 120–threonine 122 are extracellular. Residues phenylalanine 123–leucine 140 form a helical membrane-spanning segment. The Cytoplasmic portion of the chain corresponds to arginine 141–serine 178.

Belongs to the PRA1 family. In terms of assembly, interacts with CCR5 and GDE1.

The protein localises to the endosome membrane. Functionally, may be involved in ER/Golgi transport and vesicular traffic. Plays a proapoptotic role in cerulenin-induced neuroblastoma apoptosis. The chain is PRA1 family protein 2 (PRAF2) from Bos taurus (Bovine).